Reading from the N-terminus, the 201-residue chain is Small ribosomal subunit protein uS4c (201 aa).

Residues 91-151 (MRLDNIIFQL…TKNPEELRTI (61 aa)) form the S4 RNA-binding domain.

This sequence belongs to the universal ribosomal protein uS4 family. In terms of assembly, part of the 30S ribosomal subunit. Contacts protein S5. The interaction surface between S4 and S5 is involved in control of translational fidelity.

Its subcellular location is the plastid. The protein resides in the chloroplast. Functionally, one of the primary rRNA binding proteins, it binds directly to 16S rRNA where it nucleates assembly of the body of the 30S subunit. In terms of biological role, with S5 and S12 plays an important role in translational accuracy. This is Small ribosomal subunit protein uS4c (rps4) from Welwitschia mirabilis (Tree tumbo).